Reading from the N-terminus, the 138-residue chain is Large ribosomal subunit protein bL19 (138 aa).

Belongs to the bacterial ribosomal protein bL19 family.

Its function is as follows. This protein is located at the 30S-50S ribosomal subunit interface and may play a role in the structure and function of the aminoacyl-tRNA binding site. This is Large ribosomal subunit protein bL19 from Leptospira interrogans serogroup Icterohaemorrhagiae serovar copenhageni (strain Fiocruz L1-130).